Here is a 201-residue protein sequence, read N- to C-terminus: Glutathione peroxidase 1 (201 aa).

A Phosphoserine modification is found at Ser32. Residue Sec47 is part of the active site. Residue Sec47 is a non-standard amino acid, selenocysteine. 3 positions are modified to N6-acetyllysine; alternate: Lys86, Lys112, and Lys146. Residues Lys86, Lys112, and Lys146 each carry the N6-succinyllysine; alternate modification. Residues Ser195 and Ser199 each carry the phosphoserine modification.

This sequence belongs to the glutathione peroxidase family. As to quaternary structure, homotetramer. Interacts with MIEN1. During periods of oxidative stress, Sec-47 may react with a superoxide radical, irreversibly lose hydroselenide and be converted to dehydroalanine.

The protein localises to the cytoplasm. The protein resides in the mitochondrion. The enzyme catalyses 2 glutathione + H2O2 = glutathione disulfide + 2 H2O. The catalysed reaction is a hydroperoxy polyunsaturated fatty acid + 2 glutathione = a hydroxy polyunsaturated fatty acid + glutathione disulfide + H2O. It carries out the reaction tert-butyl hydroperoxide + 2 glutathione = tert-butanol + glutathione disulfide + H2O. It catalyses the reaction cumene hydroperoxide + 2 glutathione = 2-phenylpropan-2-ol + glutathione disulfide + H2O. The enzyme catalyses (13S)-hydroperoxy-(9Z,11E)-octadecadienoate + 2 glutathione = (13S)-hydroxy-(9Z,11E)-octadecadienoate + glutathione disulfide + H2O. The catalysed reaction is (9S)-hydroperoxy-(10E,12Z)-octadecadienoate + 2 glutathione = (9S)-hydroxy-(10E,12Z)-octadecadienoate + glutathione disulfide + H2O. It carries out the reaction (5S)-hydroperoxy-(6E,8Z,11Z,14Z)-eicosatetraenoate + 2 glutathione = (5S)-hydroxy-(6E,8Z,11Z,14Z)-eicosatetraenoate + glutathione disulfide + H2O. It catalyses the reaction (12S)-hydroperoxy-(5Z,8Z,10E,14Z)-eicosatetraenoate + 2 glutathione = (12S)-hydroxy-(5Z,8Z,10E,14Z)-eicosatetraenoate + glutathione disulfide + H2O. The enzyme catalyses (12R)-hydroperoxy-(5Z,8Z,10E,14Z)-eicosatetraenoate + 2 glutathione = (12R)-hydroxy-(5Z,8Z,10E,14Z)-eicosatetraenoate + glutathione disulfide + H2O. The catalysed reaction is (15S)-hydroperoxy-(5Z,8Z,11Z,13E)-eicosatetraenoate + 2 glutathione = (15S)-hydroxy-(5Z,8Z,11Z,13E)-eicosatetraenoate + glutathione disulfide + H2O. It carries out the reaction (5S)-hydroperoxy-(6E,8Z,11Z,14Z,17Z)-eicosapentaenoate + 2 glutathione = (5S)-hydroxy-(6E,8Z,11Z,14Z,17Z)-eicosapentaenoate + glutathione disulfide + H2O. It catalyses the reaction (12S)-hydroperoxy-(5Z,8Z,10E,14Z,17Z)-eicosapentaenoate + 2 glutathione = (12S)-hydroxy-(5Z,8Z,10E,14Z,17Z)-eicosapentaenoate + glutathione disulfide + H2O. The enzyme catalyses (15S)-hydroperoxy-(5Z,8Z,11Z,13E,17Z)-eicosapentaenoate + 2 glutathione = (15S)-hydroxy-(5Z,8Z,11Z,13E,17Z)-eicosapentaenoate + glutathione disulfide + H2O. The catalysed reaction is (15S)-hydroperoxy-(11Z,13E)-eicosadienoate + 2 glutathione = (15S)-hydroxy-(11Z,13E)-eicosadienoate + glutathione disulfide + H2O. It carries out the reaction (17S)-hydroperoxy-(4Z,7Z,10Z,13Z,15E,19Z)-docosahexaenoate + 2 glutathione = (17S)-hydroxy-(4Z,7Z,10Z,13Z,15E,19Z)-docosahexaenoate + glutathione disulfide + H2O. Its function is as follows. Catalyzes the reduction of hydroperoxides in a glutathione-dependent manner thus regulating cellular redox homeostasis. Can reduce small soluble hydroperoxides such as H2O2, cumene hydroperoxide and tert-butyl hydroperoxide, as well as several fatty acid-derived hydroperoxides. In platelets catalyzes the reduction of 12-hydroperoxyeicosatetraenoic acid, the primary product of the arachidonate 12-lipoxygenase pathway. The sequence is that of Glutathione peroxidase 1 (GPX1) from Pan troglodytes (Chimpanzee).